Consider the following 191-residue polypeptide: dTTP/UTP pyrophosphatase (191 aa).

Residue Asp70 is the Proton acceptor of the active site.

It belongs to the Maf family. YhdE subfamily. It depends on a divalent metal cation as a cofactor.

It localises to the cytoplasm. It carries out the reaction dTTP + H2O = dTMP + diphosphate + H(+). The enzyme catalyses UTP + H2O = UMP + diphosphate + H(+). Nucleoside triphosphate pyrophosphatase that hydrolyzes dTTP and UTP. May have a dual role in cell division arrest and in preventing the incorporation of modified nucleotides into cellular nucleic acids. The protein is dTTP/UTP pyrophosphatase of Clostridium novyi (strain NT).